The chain runs to 341 residues: Anthranilate phosphoribosyltransferase (341 aa).

5-phospho-alpha-D-ribose 1-diphosphate-binding positions include G79, 82–83 (GD), T87, 89–92 (NIST), 107–115 (KHGNRAVSS), and S119. G79 is a binding site for anthranilate. Position 91 (S91) interacts with Mg(2+). Anthranilate is bound at residue N110. Position 165 (R165) interacts with anthranilate. Mg(2+)-binding residues include D224 and E225.

This sequence belongs to the anthranilate phosphoribosyltransferase family. As to quaternary structure, homodimer. Mg(2+) serves as cofactor.

The enzyme catalyses N-(5-phospho-beta-D-ribosyl)anthranilate + diphosphate = 5-phospho-alpha-D-ribose 1-diphosphate + anthranilate. It functions in the pathway amino-acid biosynthesis; L-tryptophan biosynthesis; L-tryptophan from chorismate: step 2/5. In terms of biological role, catalyzes the transfer of the phosphoribosyl group of 5-phosphorylribose-1-pyrophosphate (PRPP) to anthranilate to yield N-(5'-phosphoribosyl)-anthranilate (PRA). This is Anthranilate phosphoribosyltransferase from Bacillus mycoides (strain KBAB4) (Bacillus weihenstephanensis).